A 119-amino-acid polypeptide reads, in one-letter code: Large ribosomal subunit protein bL20 (119 aa).

Belongs to the bacterial ribosomal protein bL20 family.

Its function is as follows. Binds directly to 23S ribosomal RNA and is necessary for the in vitro assembly process of the 50S ribosomal subunit. It is not involved in the protein synthesizing functions of that subunit. The sequence is that of Large ribosomal subunit protein bL20 from Chloroflexus aurantiacus (strain ATCC 29366 / DSM 635 / J-10-fl).